The primary structure comprises 302 residues: Probable 2-(5''-triphosphoribosyl)-3'-dephosphocoenzyme-A synthase 1 (302 aa).

It belongs to the CitG/MdcB family.

The enzyme catalyses 3'-dephospho-CoA + ATP = 2'-(5''-triphospho-alpha-D-ribosyl)-3'-dephospho-CoA + adenine. The sequence is that of Probable 2-(5''-triphosphoribosyl)-3'-dephosphocoenzyme-A synthase 1 from Salmonella typhi.